The following is a 274-amino-acid chain: Orotidine 5'-phosphate decarboxylase (274 aa).

Residue Lys95 is the Proton donor of the active site.

Belongs to the OMP decarboxylase family. Type 2 subfamily.

It catalyses the reaction orotidine 5'-phosphate + H(+) = UMP + CO2. Its pathway is pyrimidine metabolism; UMP biosynthesis via de novo pathway; UMP from orotate: step 2/2. The polypeptide is Orotidine 5'-phosphate decarboxylase (Mycolicibacterium paratuberculosis (strain ATCC BAA-968 / K-10) (Mycobacterium paratuberculosis)).